We begin with the raw amino-acid sequence, 304 residues long: MSSVKPLVYAVIRFLREQSQMDAYTSDEQESLEVAIQCLETVFKISPEDTHLAVSQPLTEMFTNSVCKNDIRPLSNSVPEDVGKADQLKDEGNNHMKEENYAAAVDCYTQAIELDPNNAVYYCNRAAAQSKLSHYTDAIKDCEKAIAIDSKYSKAYGRMGLALTAMNKFEEAVTSYQKALDLDPENDSYKSNLKIAEQKLREVSSPTGTGLTFDMASLINNPAFITMAASLMQNPQVQQLMSGMMTNAIGGPAAGVGGLTDLSSLIQAGQQFAQQIQQQNPELIEQLRNHIRSRSFSSSTEEHS.

TPR repeat units lie at residues 15-49, 85-118, 120-152, and 153-186; these read LREQ…SPED, ADQL…DPNN, VYYC…DSKY, and SKAY…DPEN. At lysine 131 the chain carries N6-acetyllysine. A phosphoserine mark is found at serine 293, serine 295, and serine 297.

It belongs to the SGT family. In terms of assembly, homooligomerize. As to expression, expressed specifically in brain.

In terms of biological role, co-chaperone that binds directly to HSC70 and HSP70 and regulates their ATPase activity. The chain is Small glutamine-rich tetratricopeptide repeat-containing protein beta (Sgtb) from Rattus norvegicus (Rat).